The following is a 94-amino-acid chain: DNA-binding protein HU (94 aa).

The protein belongs to the bacterial histone-like protein family. Homodimer.

Histone-like DNA-binding protein which is capable of wrapping DNA to stabilize it, and thus to prevent its denaturation under extreme environmental conditions. It is essential for heterocyst differentiation. In Nostoc sp. (strain PCC 7120 / SAG 25.82 / UTEX 2576), this protein is DNA-binding protein HU (hup).